A 320-amino-acid chain; its full sequence is Lipoyl synthase (320 aa).

Residues Cys-67, Cys-72, Cys-78, Cys-93, Cys-97, Cys-100, and Ser-307 each coordinate [4Fe-4S] cluster. The Radical SAM core domain occupies 79–296 (FNHGTATFMI…RDKANEMGFE (218 aa)).

Belongs to the radical SAM superfamily. Lipoyl synthase family. Requires [4Fe-4S] cluster as cofactor.

It localises to the cytoplasm. It catalyses the reaction [[Fe-S] cluster scaffold protein carrying a second [4Fe-4S](2+) cluster] + N(6)-octanoyl-L-lysyl-[protein] + 2 oxidized [2Fe-2S]-[ferredoxin] + 2 S-adenosyl-L-methionine + 4 H(+) = [[Fe-S] cluster scaffold protein] + N(6)-[(R)-dihydrolipoyl]-L-lysyl-[protein] + 4 Fe(3+) + 2 hydrogen sulfide + 2 5'-deoxyadenosine + 2 L-methionine + 2 reduced [2Fe-2S]-[ferredoxin]. It participates in protein modification; protein lipoylation via endogenous pathway; protein N(6)-(lipoyl)lysine from octanoyl-[acyl-carrier-protein]: step 2/2. In terms of biological role, catalyzes the radical-mediated insertion of two sulfur atoms into the C-6 and C-8 positions of the octanoyl moiety bound to the lipoyl domains of lipoate-dependent enzymes, thereby converting the octanoylated domains into lipoylated derivatives. In Haemophilus influenzae (strain ATCC 51907 / DSM 11121 / KW20 / Rd), this protein is Lipoyl synthase.